The sequence spans 363 residues: Methyltransferase pynC (363 aa).

Residues 199 to 200 (GG), Asp-225, 254 to 255 (SF), Arg-270, and Arg-271 contribute to the S-adenosyl-L-methionine site.

The protein belongs to the class I-like SAM-binding methyltransferase superfamily. Cation-independent O-methyltransferase family.

Its pathway is secondary metabolite biosynthesis. In terms of biological role, methyltransferase; part of the gene cluster that mediates the biosynthesis of pyranonigrins, a family of antioxidative compounds. The first step of pyranonigrins biosynthesis is performed by the hybrid PKS-NRPS synthetase that condenses 6 malonyl-CoA units to an acetyl starter unit, to form a 1,3,5-trioxotetradecane-6,8-dienyl-ACP. The enoyl reductase (ER) domain of pynA is likely to be functional during the first two rounds of polyketide chain extension, to generate the saturated C-C bonds of the alkyl side chain. PynA subsequently forms the amide bond between the acyl chain and L-serine. Although pynA has a terminal reductase domain, it appears to require the thioesterase pynI for the release of the straight-chain intermediate from pynA via the formation of a tetramic acid pyranonigrin J. The methyltransferase pynC then coverts pyranonigrin J to pyranonigrin I via N-methylation. The FAD-dependent monooxygenase pynG catalyzes an epoxidation-mediated cyclization to form the dihydro-gamma-pyrone moiety, followed by pynD-catalyzed oxidation of the alcohol to the ketone and enolization to yield the characteristic tetramic acid-fused gamma-pyrone core of pyranonigrin H. Pyranonigrin H is substrate of pynH for dehydration-mediated exo-methylene formation from the serine side chain to produce pyranonigrin E, before the oxidase pynE reduces the exo-methylene of pyranonigrin E into a pendant methyl to form pyranonigrin G. The FAD-linked oxidoreductase pynB performs the reverse reaction and converts pyranonigrin G back to pyranonigrin E. This chain is Methyltransferase pynC, found in Aspergillus niger (strain ATCC MYA-4892 / CBS 513.88 / FGSC A1513).